The primary structure comprises 228 residues: Urease accessory protein UreF (228 aa).

Belongs to the UreF family. UreD, UreF and UreG form a complex that acts as a GTP-hydrolysis-dependent molecular chaperone, activating the urease apoprotein by helping to assemble the nickel containing metallocenter of UreC. The UreE protein probably delivers the nickel.

The protein localises to the cytoplasm. Functionally, required for maturation of urease via the functional incorporation of the urease nickel metallocenter. The sequence is that of Urease accessory protein UreF from Prochlorococcus marinus subsp. pastoris (strain CCMP1986 / NIES-2087 / MED4).